The chain runs to 115 residues: Ig kappa chain V region 3315 (115 aa).

The segment at 1–24 (AQIVMTQTPSSVSAAVGGTVTINC) is framework-1. A complementarity-determining-1 region spans residues 25–37 (QSSQSVYENGRLS). The segment at 38-52 (WFQQKPGQPPKRLIY) is framework-2. The complementarity-determining-2 stretch occupies residues 53 to 59 (RASTLAS). Residues 60 to 91 (GVSSRFTGSGSGTQFTLSISDVQCDDAATYYC) are framework-3. The interval 92–104 (LGNYDCSSGDSFT) is complementarity-determining-3. Residues 105–114 (FGGGTEVVVK) are framework-4.

This is Ig kappa chain V region 3315 from Oryctolagus cuniculus (Rabbit).